The primary structure comprises 156 residues: Aspartate carbamoyltransferase regulatory chain (156 aa).

Zn(2+)-binding residues include Cys-109, Cys-114, Cys-138, and Cys-141.

Belongs to the PyrI family. In terms of assembly, contains catalytic and regulatory chains. Zn(2+) serves as cofactor.

In terms of biological role, involved in allosteric regulation of aspartate carbamoyltransferase. The polypeptide is Aspartate carbamoyltransferase regulatory chain (Baumannia cicadellinicola subsp. Homalodisca coagulata).